Consider the following 563-residue polypeptide: Inclusion body clearance protein IML2 (563 aa).

This sequence belongs to the IML2 family. In terms of assembly, interacts with lipid droplet proteins.

It is found in the cytoplasm. It localises to the nucleus. Its function is as follows. Inclusion body (IB) resident protein that interacts strongly with lipid droplet (LD) proteins. Involved in LD-mediated IB clearing after protein folding stress, probably by enabling access to the IBs of an LD-stored soluble sterol derivative that acts as a chaperone in inclusion clearing. This chain is Inclusion body clearance protein IML2, found in Schizosaccharomyces pombe (strain 972 / ATCC 24843) (Fission yeast).